The primary structure comprises 1216 residues: DNA-directed RNA polymerase subunit beta (1216 aa).

A disordered region spans residues 1185–1216 (EEKQELPSQEYESLNLDQELKTASENVSESEF). Over residues 1190–1216 (LPSQEYESLNLDQELKTASENVSESEF) the composition is skewed to polar residues.

It belongs to the RNA polymerase beta chain family. In terms of assembly, the RNAP catalytic core consists of 2 alpha, 1 beta, 1 beta' and 1 omega subunit. When a sigma factor is associated with the core the holoenzyme is formed, which can initiate transcription.

The enzyme catalyses RNA(n) + a ribonucleoside 5'-triphosphate = RNA(n+1) + diphosphate. Functionally, DNA-dependent RNA polymerase catalyzes the transcription of DNA into RNA using the four ribonucleoside triphosphates as substrates. This Mycoplasmopsis pulmonis (strain UAB CTIP) (Mycoplasma pulmonis) protein is DNA-directed RNA polymerase subunit beta.